A 500-amino-acid polypeptide reads, in one-letter code: Perfringolysin O (500 aa).

Residues 1–28 (MIRFKKTKLIASIAMALCLFSQPVISFS) form the signal peptide. 4 consecutive transmembrane segments (beta stranded) span residues 189-202 (KSQISSALNVNAKV), 209-218 (VDFNAVANNE), 287-296 (SKDVQAAFKA), and 304-316 (KNSQQYKDIYENS). Residues 458 to 468 (ECTGLAWEWWR) carry the Conserved undecapeptide motif. Residues 490–491 (TL) carry the Cholesterol binding motif.

This sequence belongs to the cholesterol-dependent cytolysin family. In terms of assembly, modeling based on cryo-EM shows a homooligomeric pore complex containing 38-44 subunits; when inserted in the host membrane.

The protein localises to the secreted. Its subcellular location is the host cell membrane. In terms of biological role, a cholesterol-dependent toxin that causes cytolysis by forming pores in cholesterol-containing host membranes. After binding to target membranes, the protein assembles into a pre-pore complex. A major conformational change leads to insertion in the host membrane and formation of an oligomeric pore complex. Cholesterol is required for binding to host cell membranes, membrane insertion and pore formation; cholesterol binding is mediated by a Thr-Leu pair in the C-terminus. Can be reversibly inactivated by oxidation. The protein is Perfringolysin O (pfo) of Clostridium perfringens (strain 13 / Type A).